Consider the following 163-residue polypeptide: Cytochrome c-type biogenesis protein CcmE (163 aa).

Residues 1–8 are Cytoplasmic-facing; sequence MNPRRKKR. Residues 9-29 form a helical; Signal-anchor for type II membrane protein membrane-spanning segment; the sequence is LTLAVALIVGVAGAASLLLYA. At 30-163 the chain is on the periplasmic side; that stretch reads LNSNLNLFYT…QEGVEKTAQY (134 aa). 2 residues coordinate heme: H131 and Y135.

It belongs to the CcmE/CycJ family.

It is found in the cell inner membrane. Its function is as follows. Heme chaperone required for the biogenesis of c-type cytochromes. Transiently binds heme delivered by CcmC and transfers the heme to apo-cytochromes in a process facilitated by CcmF and CcmH. This is Cytochrome c-type biogenesis protein CcmE from Shewanella denitrificans (strain OS217 / ATCC BAA-1090 / DSM 15013).